Here is a 459-residue protein sequence, read N- to C-terminus: Protein phosphatase 1M (459 aa).

Over residues 1 to 10 (MSAGWFRRRF) the composition is skewed to basic residues. Residues 1 to 64 (MSAGWFRRRF…SRPVRSPARG (64 aa)) are disordered. The span at 14 to 27 (EPLPAPRPPGPHAS) shows a compositional bias: pro residues. A compositionally biased stretch (low complexity) spans 38-48 (RGSSSSPGAAD). Residues Asp-125 and Gly-126 each coordinate Mn(2+). The PPM-type phosphatase domain maps to 162–459 (MHLNGRCICP…HSQGQESSDH (298 aa)).

The protein belongs to the PP2C family. It depends on Mg(2+) as a cofactor. Mn(2+) serves as cofactor.

The protein localises to the nucleus. It carries out the reaction O-phospho-L-seryl-[protein] + H2O = L-seryl-[protein] + phosphate. The catalysed reaction is O-phospho-L-threonyl-[protein] + H2O = L-threonyl-[protein] + phosphate. The chain is Protein phosphatase 1M (PPM1M) from Homo sapiens (Human).